The following is a 525-amino-acid chain: Phosphatidylinositol 4-kinase alpha 2 (525 aa).

A pleckstrin homology (PH) domain conferring phosphoinositide binding specificity region spans residues 163–278; the sequence is SDVRQHIVDG…VKPQACIFKV (116 aa). A PI3K/PI4K catalytic domain is found at 239–509; sequence VDSGIPLQSA…VCTDAYNKWT (271 aa). Positions 245-251 are G-loop; sequence LQSAAKV. The tract at residues 373-381 is catalytic loop; that stretch reads QPKDRHNGN. Positions 392–417 are activation loop; sequence HIDFGFILETSPGGNMRFENAHFKLS.

Belongs to the PI3/PI4-kinase family. Type III PI4K subfamily.

Its subcellular location is the membrane. The enzyme catalyses a 1,2-diacyl-sn-glycero-3-phospho-(1D-myo-inositol) + ATP = a 1,2-diacyl-sn-glycero-3-phospho-(1D-myo-inositol 4-phosphate) + ADP + H(+). Acts on phosphatidylinositol (PtdIns) in the first committed step in the production of the second messenger inositol-1,4,5,-trisphosphate. In Arabidopsis thaliana (Mouse-ear cress), this protein is Phosphatidylinositol 4-kinase alpha 2 (PI4KA2).